The sequence spans 128 residues: Gastrotropin (128 aa).

At Ala2 the chain carries N-acetylalanine.

The protein belongs to the calycin superfamily. Fatty-acid binding protein (FABP) family.

The protein localises to the cytoplasm. The protein resides in the membrane. Binds to bile acids and is involved in enterohepatic bile acid metabolism. Required for efficient apical to basolateral transport of conjugated bile acids in ileal enterocytes. Stimulates gastric acid and pepsinogen secretion. The protein is Gastrotropin (FABP6) of Bos taurus (Bovine).